The chain runs to 603 residues: MRRKEKRLLQAVALALAALVLLPNVGLWALYRERQPDGSPGGLGAAVAPAAVQELHSRQKKTFFLGAEQRLKDWHNKEAIRRDAQRVGYGEQGKPYPMTDAERVDQAYRENGFNIYVSDKISLNRSLPDIRHPNCNSKLYLETLPNTSIIIPFHNEGWSSLLRTVHSVLNRSPPELVAEIVLVDDFSDREHLKKPLEDYMALFPSVRILRTKKREGLIRTRMLGASAATGDVVTFLDSHCEANVNWLPPLLDRIARNRKTIVCPMIDVIDHDDFRYETQAGDAMRGAFDWEMYYKRIPIPPELQKADPSDPFESPVMAGGLFAVDRKWFWELGGYDPGLEIWGGEQYEISFKVWMCGGRMEDIPCSRVGHIYRKYVPYKVPAGVSLARNLKRVAEVWMDEYAEYIYQRRPEYRHLSAGDVVAQKKLRVSLNCKSFKWFMTKIAWDLPKFYPPVEPPAAAWGEIRNVGTGLCTDTKLGTLGSPLRLETCIRGRGEAAWNSMQVFTFTWREDIRPGDPQHTKKFCFDAVSHTSPVTLYDCHSMKGNQLWKYRKDKTLYHPVSGSCMDCSESDHRVFMNTCNPSSLTQQWLFEHTNSTVLENFNKN.

The Cytoplasmic segment spans residues 1–11 (MRRKEKRLLQA). A helical; Signal-anchor for type II membrane protein transmembrane segment spans residues 12–31 (VALALAALVLLPNVGLWALY). The Lumenal portion of the chain corresponds to 32 to 603 (RERQPDGSPG…STVLENFNKN (572 aa)). 2 N-linked (GlcNAc...) asparagine glycosylation sites follow: asparagine 124 and asparagine 146. Cystine bridges form between cysteine 135–cysteine 365, cysteine 356–cysteine 432, cysteine 471–cysteine 488, cysteine 523–cysteine 538, and cysteine 563–cysteine 578. The catalytic subdomain A stretch occupies residues 144–253 (LPNTSIIIPF…VNWLPPLLDR (110 aa)). 2 residues coordinate substrate: aspartate 185 and arginine 214. Aspartate 237 contacts Mn(2+). Substrate is bound at residue serine 238. Position 239 (histidine 239) interacts with Mn(2+). The tract at residues 311 to 373 (PFESPVMAGG…PCSRVGHIYR (63 aa)) is catalytic subdomain B. Substrate is bound at residue tryptophan 342. Histidine 370 contributes to the Mn(2+) binding site. Residues arginine 373 and tyrosine 378 each contribute to the substrate site. Residues 373–384 (RKYVPYKVPAGV) are flexible loop. One can recognise a Ricin B-type lectin domain in the interval 458–590 (AAWGEIRNVG…SSLTQQWLFE (133 aa)). Asparagine 593 is a glycosylation site (N-linked (GlcNAc...) asparagine).

It belongs to the glycosyltransferase 2 family. GalNAc-T subfamily. Requires Mn(2+) as cofactor. In terms of tissue distribution, expressed at higher level than GALNT9. In the developing hindbrain region of 14.5 dpc embryos it accumulates in the rapidly dividing, undifferentiated ventricular zone adjacent to the pons. It also accumulates in the regions immediately rostral and caudal to the dorsal rhombic lips differentiating into the cerebellum. Not expressed in the developing choroid plexus.

Its subcellular location is the golgi apparatus membrane. The enzyme catalyses L-seryl-[protein] + UDP-N-acetyl-alpha-D-galactosamine = a 3-O-[N-acetyl-alpha-D-galactosaminyl]-L-seryl-[protein] + UDP + H(+). It carries out the reaction L-threonyl-[protein] + UDP-N-acetyl-alpha-D-galactosamine = a 3-O-[N-acetyl-alpha-D-galactosaminyl]-L-threonyl-[protein] + UDP + H(+). It participates in protein modification; protein glycosylation. In terms of biological role, catalyzes the initial reaction in O-linked oligosaccharide biosynthesis, the transfer of an N-acetyl-D-galactosamine residue to a serine or threonine residue on the protein receptor. Has activity toward Muc5Ac and EA2 peptide substrates. In Mus musculus (Mouse), this protein is Polypeptide N-acetylgalactosaminyltransferase 10 (Galnt10).